Consider the following 193-residue polypeptide: Imidazoleglycerol-phosphate dehydratase (193 aa).

It belongs to the imidazoleglycerol-phosphate dehydratase family.

It is found in the cytoplasm. It catalyses the reaction D-erythro-1-(imidazol-4-yl)glycerol 3-phosphate = 3-(imidazol-4-yl)-2-oxopropyl phosphate + H2O. It functions in the pathway amino-acid biosynthesis; L-histidine biosynthesis; L-histidine from 5-phospho-alpha-D-ribose 1-diphosphate: step 6/9. The polypeptide is Imidazoleglycerol-phosphate dehydratase (Methanoculleus marisnigri (strain ATCC 35101 / DSM 1498 / JR1)).